A 267-amino-acid chain; its full sequence is Putative glycosyltransferase 63 (267 aa).

The protein belongs to the glycosyltransferase group 1 family. Glycosyltransferase 4 subfamily.

The polypeptide is Putative glycosyltransferase 63 (SIFV0063) (Sulfolobus islandicus filamentous virus (isolate Iceland/Hveragerdi) (SIFV)).